A 686-amino-acid chain; its full sequence is 3',5'-cyclic-AMP phosphodiesterase 4C (686 aa).

Phosphoserine occurs at positions 9, 28, 40, and 83. 2 disordered regions span residues 88 to 116 (NGLP…VHHV) and 124 to 143 (YRSD…TSSA). Positions 124–133 (YRSDSDHEPS) are enriched in basic and acidic residues. In terms of domain architecture, PDEase spans 313–642 (VQTDQEEQLA…EWYQSRIPCS (330 aa)). H389 (proton donor) is an active-site residue. H389 contacts 3',5'-cyclic AMP. AMP-binding residues include H389 and H393. Zn(2+)-binding residues include H393, H429, D430, and D547. Positions 430, 547, 598, and 601 each coordinate AMP. D430 serves as a coordination point for Mg(2+). Position 430 (D430) interacts with Mn(2+). The 3',5'-cyclic AMP site is built by Q598 and F601. Residue S642 is modified to Phosphoserine. A compositionally biased stretch (acidic residues) spans 660–671 (EAEEEEEEEDEG). Positions 660–686 (EAEEEEEEEDEGQCTALNRESSELPST) are disordered. A compositionally biased stretch (polar residues) spans 674–686 (TALNRESSELPST).

Belongs to the cyclic nucleotide phosphodiesterase family. PDE4 subfamily. Part of a complex containing AKAP5, ADCY5, ADCY6 and PKD2. Zn(2+) serves as cofactor. Requires Mg(2+) as cofactor. It depends on Mn(2+) as a cofactor.

Its subcellular location is the cell projection. The protein localises to the cilium. It carries out the reaction 3',5'-cyclic AMP + H2O = AMP + H(+). Its pathway is purine metabolism; 3',5'-cyclic AMP degradation; AMP from 3',5'-cyclic AMP: step 1/1. Its function is as follows. Hydrolyzes the second messenger cAMP, which is a key regulator of many important physiological processes. This is 3',5'-cyclic-AMP phosphodiesterase 4C from Mus musculus (Mouse).